Here is a 584-residue protein sequence, read N- to C-terminus: Proteasome-associated ATPase (584 aa).

Positions 16-91 form a coiled coil; that stretch reads EELASQVRLL…KEEVDRLAQP (76 aa). 273–278 provides a ligand contact to ATP; sequence GCGKTL. Residues 583-584 form a docks into pockets in the proteasome alpha-ring region; it reads YL.

This sequence belongs to the AAA ATPase family. Homohexamer. Assembles into a hexameric ring structure that caps the 20S proteasome core. Strongly interacts with the prokaryotic ubiquitin-like protein Pup through a hydrophobic interface; the interacting region of ARC lies in its N-terminal coiled-coil domain. There is one Pup binding site per ARC hexamer ring. Upon ATP-binding, the C-terminus of ARC interacts with the alpha-rings of the proteasome core, possibly by binding to the intersubunit pockets.

It functions in the pathway protein degradation; proteasomal Pup-dependent pathway. In terms of biological role, ATPase which is responsible for recognizing, binding, unfolding and translocation of pupylated proteins into the bacterial 20S proteasome core particle. May be essential for opening the gate of the 20S proteasome via an interaction with its C-terminus, thereby allowing substrate entry and access to the site of proteolysis. Thus, the C-termini of the proteasomal ATPase may function like a 'key in a lock' to induce gate opening and therefore regulate proteolysis. The protein is Proteasome-associated ATPase of Nocardioides sp. (strain ATCC BAA-499 / JS614).